A 544-amino-acid chain; its full sequence is uncharacterized protein (544 aa).

14 consecutive transmembrane segments (helical) span residues 31–51, 52–72, 84–104, 116–136, 162–182, 191–211, 230–250, 257–277, 318–338, 356–376, 383–403, 407–427, 450–470, and 501–521; these read ILVFYLLFFLTDVAGIPAALA, GSVLMIGKIFDAINDPIIGLL, LPWMLGGMIPFALFYTAQWLI, WGLFIYYVAIAMAFNLCYTTV, FAFSIGGSILSLILYILIAAG, FGELGVMISVLSISALLWSAL, LAPLLMAAGITLILLAIAKSF, GFDYISFFLILLGLIWGGFGF, FLFVIGIYLCSWLAVQLTASI, TIALAVQGTALVMLFVWQALA, VIYFLGSMVWMGAEAGLWLVQ, VALLYTLAIFAGVGVSVAYLI, FFYAFMVLLQKVGLALGLFLV, and FAVAPLPAFFLLGGLILAIFY.

It belongs to the sodium:galactoside symporter (TC 2.A.2) family.

It localises to the cell membrane. This is an uncharacterized protein from Synechocystis sp. (strain ATCC 27184 / PCC 6803 / Kazusa).